A 365-amino-acid polypeptide reads, in one-letter code: Class E basic helix-loop-helix protein 22 (365 aa).

Disordered regions lie at residues 34 to 93 (AFRS…GGGG), 134 to 156 (GRGS…DGRC), and 188 to 225 (HLHG…KEQK). Residues 82–93 (GGGGAGGGGGGG) show a composition bias toward gly residues. The span at 191 to 216 (GGAGLPPGGSTGSGGGGSGGGGGGGS) shows a compositional bias: gly residues. In terms of domain architecture, bHLH spans 226–280 (ALRLNINARERRRMHDLNDALDELRAVIPYAHSPSVRKLSKIATLLLAKNYILMQ).

Heterodimer with other bHLH proteins, like TCF3/E47. Kidney, lung, brain and pancreas (insulinoma).

The protein resides in the nucleus. Inhibits DNA binding of TCF3/E47 homodimers and TCF3 (E47)/NEUROD1 heterodimers and acts as a strong repressor of Neurod1 and Myod-responsive genes, probably by heterodimerization with class a basic helix-loop-helix factors. Despite the presence of an intact basic domain, does not bind to DNA. The polypeptide is Class E basic helix-loop-helix protein 22 (BHLHE22) (Mesocricetus auratus (Golden hamster)).